The primary structure comprises 206 residues: MAKFDVYDLSKKKVGELDLADAVFAGEVNEHLFYEVVKAKLASDRSGTHAVKNRSLVSGGGKKPWKQKHTGRARQGSTRASQWVGGGKAMGPKPRDYSYDVPKKVRKAALRSALALRSKDQKLVIVQEWKPGAPKTAAAAKVLSALGAKKALVVDDAANLALAKSVRNLHGSDFLAVEGLNVYDILRHDALVLTADTAKKLEASLS.

Residues 48-97 form a disordered region; that stretch reads THAVKNRSLVSGGGKKPWKQKHTGRARQGSTRASQWVGGGKAMGPKPRDY. Positions 63-72 are enriched in basic residues; that stretch reads KPWKQKHTGR.

Belongs to the universal ribosomal protein uL4 family. In terms of assembly, part of the 50S ribosomal subunit.

One of the primary rRNA binding proteins, this protein initially binds near the 5'-end of the 23S rRNA. It is important during the early stages of 50S assembly. It makes multiple contacts with different domains of the 23S rRNA in the assembled 50S subunit and ribosome. Functionally, forms part of the polypeptide exit tunnel. The sequence is that of Large ribosomal subunit protein uL4 from Anaeromyxobacter dehalogenans (strain 2CP-1 / ATCC BAA-258).